We begin with the raw amino-acid sequence, 436 residues long: 3-ketoacyl-CoA thiolase (436 aa).

The active-site Acyl-thioester intermediate is the Cys-99. Active-site proton acceptor residues include His-392 and Cys-422.

The protein belongs to the thiolase-like superfamily. Thiolase family. Heterotetramer of two alpha chains (FadJ) and two beta chains (FadI).

The protein resides in the cytoplasm. It carries out the reaction an acyl-CoA + acetyl-CoA = a 3-oxoacyl-CoA + CoA. It functions in the pathway lipid metabolism; fatty acid beta-oxidation. Its function is as follows. Catalyzes the final step of fatty acid oxidation in which acetyl-CoA is released and the CoA ester of a fatty acid two carbons shorter is formed. This is 3-ketoacyl-CoA thiolase from Escherichia coli O7:K1 (strain IAI39 / ExPEC).